The following is a 145-amino-acid chain: Methylglyoxal synthase (145 aa).

Positions 1-145 (MNSKKKIALV…YYQKIRKDNF (145 aa)) constitute an MGS-like domain. Substrate contacts are provided by residues histidine 12, lysine 16, 38–41 (TGTT), and 58–59 (SG). Catalysis depends on aspartate 64, which acts as the Proton donor/acceptor. Residue histidine 91 participates in substrate binding.

It belongs to the methylglyoxal synthase family.

It catalyses the reaction dihydroxyacetone phosphate = methylglyoxal + phosphate. Functionally, catalyzes the formation of methylglyoxal from dihydroxyacetone phosphate. This is Methylglyoxal synthase from Clostridium acetobutylicum (strain ATCC 824 / DSM 792 / JCM 1419 / IAM 19013 / LMG 5710 / NBRC 13948 / NRRL B-527 / VKM B-1787 / 2291 / W).